The chain runs to 335 residues: MTAPSKPVLVADIGGTNARFALADVDASVPLLDDTSREFAVVDFGSLGEAARYYLDQIGVQATQGVFAVAGRVDGDEARITNHPWVISRSRTATMLGFSTLHLINDFAAQAMAISLLRPQDVVQVGGASWRPAPIDQARNYGVIGPGTGLGVGGLIIRNGRCFPLETEGGHVSFPPGTPEEIRILEILSEQFGRVSNERLICGPGLVNIHRALSEIAGVDPGPLQPKDITARAAAGDPRSSRTIDLFCAIFGAIAGDMVLMQGAWDGVFLTGGLVPKVLDSLQHSGFRQRFEHKGRFSAIMSKVPSLAVMHPHAGLLGAAAYAVDAQRQHPGEQR.

ATP is bound at residue 11–16; it reads ADIGGT.

This sequence belongs to the bacterial glucokinase family.

The protein localises to the cytoplasm. It catalyses the reaction D-glucose + ATP = D-glucose 6-phosphate + ADP + H(+). This chain is Glucokinase, found in Xanthomonas axonopodis pv. citri (strain 306).